Reading from the N-terminus, the 437-residue chain is Enolase 2 (437 aa).

K60 is covalently cross-linked (Glycyl lysine isopeptide (Lys-Gly) (interchain with G-Cter in ubiquitin)). At S138 the chain carries Phosphoserine. H160 is an active-site residue. S188 carries the phosphoserine modification. A Glycyl lysine isopeptide (Lys-Gly) (interchain with G-Cter in ubiquitin) cross-link involves residue K243. 2 residues coordinate Mg(2+): D247 and E296. The residue at position 313 (T313) is a Phosphothreonine. D321 is a binding site for Mg(2+). Residue T324 is modified to Phosphothreonine. A Glycyl lysine isopeptide (Lys-Gly) (interchain with G-Cter in ubiquitin) cross-link involves residue K358.

This sequence belongs to the enolase family. As to quaternary structure, homodimer. The cofactor is Mg(2+).

The protein resides in the cytoplasm. The enzyme catalyses (2R)-2-phosphoglycerate = phosphoenolpyruvate + H2O. Its pathway is carbohydrate degradation; glycolysis; pyruvate from D-glyceraldehyde 3-phosphate: step 4/5. This is Enolase 2 (ENO2) from Saccharomyces cerevisiae (strain ATCC 204508 / S288c) (Baker's yeast).